A 321-amino-acid chain; its full sequence is MIFLTLEHILTHISFSVVSIVIIIHFLTLLVNEFVGLYDSSEKGMLTTFFCLTGLLITRWIYSGHLPISDLYESLIFLSWIFSIIHMVPYFKKHKNYLSTITAPSTFFTQGFATWGLLTDMHQSKILVPALQSQWLIMHVSMMVSGYAALLCGSLLSAALLVITFRKVIRIVGKNNNLLNDSFPVDEIQYMMEKKSIFKNTFFPSSRNYYRFQLIQQLDHWGFRILSIGFLFLTIGILSGAVWANEAWGSYWNWDPKETWAFITWTIFAIYFHTRTNKNLEGLNSAIVASIGFLIIWICYFGVNLLGIGLHSYGSFTLISN.

The next 8 membrane-spanning stretches (helical) occupy residues 17–37, 48–68, 71–91, 98–118, 143–163, 225–245, 259–273, and 286–306; these read VVSI…FVGL, TFFC…HLPI, LYES…VPYF, LSTI…WGLL, MVSG…LLVI, ILSI…VWAN, TWAF…IYFH, and AIVA…VNLL.

This sequence belongs to the CcmF/CycK/Ccl1/NrfE/CcsA family. May interact with Ccs1.

The protein resides in the plastid. The protein localises to the chloroplast thylakoid membrane. Functionally, required during biogenesis of c-type cytochromes (cytochrome c6 and cytochrome f) at the step of heme attachment. The protein is Cytochrome c biogenesis protein CcsA of Populus alba (White poplar).